Reading from the N-terminus, the 395-residue chain is Chalcone synthase 1 (395 aa).

At valine 2 the chain carries N-acetylvaline. The active site involves cysteine 169.

This sequence belongs to the thiolase-like superfamily. Chalcone/stilbene synthases family.

It catalyses the reaction (E)-4-coumaroyl-CoA + 3 malonyl-CoA + 3 H(+) = 2',4,4',6'-tetrahydroxychalcone + 3 CO2 + 4 CoA. It functions in the pathway secondary metabolite biosynthesis; flavonoid biosynthesis. In terms of biological role, the primary product of this enzyme is 4,2',4',6'-tetrahydroxychalcone (also termed naringenin-chalcone or chalcone) which can under specific conditions spontaneously isomerize into naringenin. This is Chalcone synthase 1 (CHS1) from Sinapis alba (White mustard).